Here is a 383-residue protein sequence, read N- to C-terminus: Acetylornithine deacetylase (383 aa).

Residue H80 participates in Zn(2+) binding. The active site involves D82. D112 provides a ligand contact to Zn(2+). Residue E144 is part of the active site. Residues E145, E169, and H355 each coordinate Zn(2+).

Belongs to the peptidase M20A family. ArgE subfamily. Homodimer. It depends on Zn(2+) as a cofactor. The cofactor is Co(2+). Glutathione is required as a cofactor.

Its subcellular location is the cytoplasm. It carries out the reaction N(2)-acetyl-L-ornithine + H2O = L-ornithine + acetate. It participates in amino-acid biosynthesis; L-arginine biosynthesis; L-ornithine from N(2)-acetyl-L-ornithine (linear): step 1/1. In terms of biological role, catalyzes the hydrolysis of the amide bond of N(2)-acetylated L-amino acids. Cleaves the acetyl group from N-acetyl-L-ornithine to form L-ornithine, an intermediate in L-arginine biosynthesis pathway, and a branchpoint in the synthesis of polyamines. This chain is Acetylornithine deacetylase, found in Escherichia coli O8 (strain IAI1).